Reading from the N-terminus, the 901-residue chain is Bifunctional protein STORR (901 aa).

Residues 12–32 traverse the membrane as a helical segment; it reads TSSVVALLLALVSILSSVVVL. Heme is bound at residue cysteine 513.

In the N-terminal section; belongs to the cytochrome P450 family. It in the C-terminal section; belongs to the aldo/keto reductase family. Heme is required as a cofactor.

The protein resides in the membrane. It carries out the reaction (R)-reticuline + NADP(+) = 1,2-dehydroreticuline + NADPH + H(+). The enzyme catalyses (S)-reticuline + reduced [NADPH--hemoprotein reductase] + O2 = 1,2-dehydroreticuline + oxidized [NADPH--hemoprotein reductase] + 2 H2O + H(+). The protein operates within alkaloid biosynthesis; morphine biosynthesis. Bifunctional protein involved in the biosynthesis of morphinan-type benzylisoquinoline alkaloids. Required for the isomerization of (S)- to (R)-reticuline. The cytochrome P450 module is responsible for the conversion of (S)-reticuline to 1,2-dehydroreticuline while the oxidoreductase module converts 1,2-dehydroreticuline to (R)-reticuline. The protein is Bifunctional protein STORR of Papaver somniferum (Opium poppy).